Reading from the N-terminus, the 238-residue chain is Protein G1-like8 (238 aa).

Disordered stretches follow at residues M1–S33 and K147–V238. Residues G10–Q27 show a composition bias toward low complexity. An ALOG domain is found at R30–K157. Residues K155–K159 carry the Nuclear localization signal motif. Residues Q165 to H176 are compositionally biased toward pro residues. Low complexity-rich tracts occupy residues Q177–Q213 and T222–V238.

The protein belongs to the plant homeotic and developmental regulators ALOG protein family.

Its subcellular location is the nucleus. Its function is as follows. Probable transcription regulator that acts as a developmental regulator by promoting cell growth in response to light. This Oryza sativa subsp. japonica (Rice) protein is Protein G1-like8 (G1L8).